Consider the following 533-residue polypeptide: Probable lipid II flippase MurJ (533 aa).

A run of 13 helical transmembrane segments spans residues 25 to 45 (ETLM…YAAF), 90 to 110 (VLFS…PLLV), 131 to 151 (LAAV…MSGM), 158 to 178 (FFAA…ALFY), 192 to 212 (YLSW…YIGV), 233 to 253 (LLLL…NLVI), 274 to 294 (IYQL…LPEL), 316 to 336 (FVLF…DDII), 350 to 370 (TTLV…FVLI), 389 to 409 (YTAI…PVLA), 412 to 432 (GIAL…FVTL), 449 to 469 (AMLL…SHRW), and 484 to 504 (GVLG…AFLI).

It belongs to the MurJ/MviN family.

It is found in the cell inner membrane. The protein operates within cell wall biogenesis; peptidoglycan biosynthesis. Functionally, involved in peptidoglycan biosynthesis. Transports lipid-linked peptidoglycan precursors from the inner to the outer leaflet of the cytoplasmic membrane. This is Probable lipid II flippase MurJ from Rhizobium tropici.